The sequence spans 545 residues: MTTNYIFVTGGVVSSLGKGIAAASLAAILEARGLNVTIMKLDPYINVDPGTMSPIQHGEVFVTEDGAETDLDLGHYERFIRTKMSRRNNFTTGRIYSDVLRKERRGDYLGATVQVIPHITNAIKERVLEGGEGHDVVLVEIGGTVGDIESLPFLEAIRQLAVDIGREHALFMHLTLVPYLAAAGEVKTKPTQHSVKELLSIGIQPDILICRSDRAVPANERAKIALFCNVPEKAVISMKDVDSIYKIPGLLKSQGLDDYICKRFSLNCPEANLSEWEQVIYEEANPAGEVTIGMVGKYIELPDAYKSVIEALKHGGLKNRVTVNIKLIDSQDVETRGVEILKDLDAILIPGGFGYRGVEGKIATARYARENNIPYLGICLGMQVALIEFARNVAGMDNANSTEFVPDCKYPVVALITEWRDEDGNVEVRSEKSDLGGTMRLGAQQCQLSDDSLVRQLYGASTIVERHRHRYEVNNMLLKQIEAAGLRVAGRSGDDQLVEIIEVPNHPWFVACQFHPEFTSTPRDGHPLFAGFVKAANEHQKRQAK.

The interval 2 to 266 (TTNYIFVTGG…DDYICKRFSL (265 aa)) is amidoligase domain. CTP is bound at residue serine 14. Serine 14 contributes to the UTP binding site. ATP contacts are provided by residues 15–20 (SLGKGI) and aspartate 72. 2 residues coordinate Mg(2+): aspartate 72 and glutamate 140. CTP is bound by residues 147-149 (DIE), 187-192 (KTKPTQ), and lysine 223. UTP contacts are provided by residues 187 to 192 (KTKPTQ) and lysine 223. 239–241 (KDV) is a binding site for ATP. The region spanning 291-542 (TIGMVGKYIE…VKAANEHQKR (252 aa)) is the Glutamine amidotransferase type-1 domain. An L-glutamine-binding site is contributed by glycine 352. Residue cysteine 379 is the Nucleophile; for glutamine hydrolysis of the active site. L-glutamine is bound by residues 380 to 383 (LGMQ), glutamate 403, and arginine 470. Residues histidine 515 and glutamate 517 contribute to the active site.

The protein belongs to the CTP synthase family. Homotetramer.

It catalyses the reaction UTP + L-glutamine + ATP + H2O = CTP + L-glutamate + ADP + phosphate + 2 H(+). The enzyme catalyses L-glutamine + H2O = L-glutamate + NH4(+). It carries out the reaction UTP + NH4(+) + ATP = CTP + ADP + phosphate + 2 H(+). It functions in the pathway pyrimidine metabolism; CTP biosynthesis via de novo pathway; CTP from UDP: step 2/2. Allosterically activated by GTP, when glutamine is the substrate; GTP has no effect on the reaction when ammonia is the substrate. The allosteric effector GTP functions by stabilizing the protein conformation that binds the tetrahedral intermediate(s) formed during glutamine hydrolysis. Inhibited by the product CTP, via allosteric rather than competitive inhibition. Functionally, catalyzes the ATP-dependent amination of UTP to CTP with either L-glutamine or ammonia as the source of nitrogen. Regulates intracellular CTP levels through interactions with the four ribonucleotide triphosphates. The sequence is that of CTP synthase from Salmonella typhi.